We begin with the raw amino-acid sequence, 324 residues long: Zinc transporter ZIP1 (324 aa).

Residues 1–30 (MGPWGEPELLVWRPEAVASEPPVPVGLEVK) lie on the Extracellular side of the membrane. A helical membrane pass occupies residues 31–51 (LGALVLLLVLTLLCSLVPICV). Residues 52-68 (LRRPGANHEGSASRQKA) lie on the Cytoplasmic side of the membrane. Residues 69 to 89 (LSLVSCFAGGVFLATCLLDLL) form a helical membrane-spanning segment. The Extracellular portion of the chain corresponds to 90–104 (PDYLAAIDEALAALH). A helical transmembrane segment spans residues 105 to 125 (VTLQFPLQEFILAMGFFLVLV). At 126–179 (MEQITLAYKEQSGPSPLEETRALLGTVNGGPQHWHDGPGVPQASGAPATPSALR) the chain is on the cytoplasmic side. Residues 180-200 (ACVLVFSLALHSVFEGLAVGL) traverse the membrane as a helical segment. Residues 201 to 206 (QRDRAR) are Extracellular-facing. A helical membrane pass occupies residues 207–227 (AMELCLALLLHKGILAVSLSL). The Cytoplasmic segment spans residues 228-237 (RLLQSHLRAQ). A helical membrane pass occupies residues 238-258 (VVAGCGILFSCMTPLGIGLGA). The Extracellular portion of the chain corresponds to 259–272 (ALAESAGPLHQLAQ). A helical membrane pass occupies residues 273–293 (SVLEGMAAGTFLYITFLEILP). The Cytoplasmic segment spans residues 294 to 303 (QELASSEQRI). Residues 304 to 324 (LKVILLLAGFALLTGLLFIQI) traverse the membrane as a helical segment.

Belongs to the ZIP transporter (TC 2.A.5) family. As to expression, ubiquitous. Expressed in most adult and fetal tissues including the epidermis.

The protein localises to the cell membrane. Its subcellular location is the endoplasmic reticulum membrane. It catalyses the reaction Zn(2+)(in) = Zn(2+)(out). Its activity is regulated as follows. Inhibited by Ni(2+) ions. Fe(2+) ions do not inhibit zinc uptake. Its function is as follows. Transporter for the divalent cation Zn(2+). Mediates the influx of Zn(2+) into cells from extracellular space. Functions as the major importer of zinc from circulating blood plasma into prostate cells. The polypeptide is Zinc transporter ZIP1 (Homo sapiens (Human)).